The chain runs to 399 residues: Nicotinate phosphoribosyltransferase (399 aa).

His-217 carries the phosphohistidine; by autocatalysis modification.

This sequence belongs to the NAPRTase family. In terms of processing, transiently phosphorylated on a His residue during the reaction cycle. Phosphorylation strongly increases the affinity for substrates and increases the rate of nicotinate D-ribonucleotide production. Dephosphorylation regenerates the low-affinity form of the enzyme, leading to product release.

It carries out the reaction nicotinate + 5-phospho-alpha-D-ribose 1-diphosphate + ATP + H2O = nicotinate beta-D-ribonucleotide + ADP + phosphate + diphosphate. The protein operates within cofactor biosynthesis; NAD(+) biosynthesis; nicotinate D-ribonucleotide from nicotinate: step 1/1. In terms of biological role, catalyzes the synthesis of beta-nicotinate D-ribonucleotide from nicotinate and 5-phospho-D-ribose 1-phosphate at the expense of ATP. The polypeptide is Nicotinate phosphoribosyltransferase (Burkholderia cenocepacia (strain HI2424)).